Consider the following 256-residue polypeptide: Imidazole glycerol phosphate synthase subunit HisF (256 aa).

Active-site residues include Asp12 and Asp131.

It belongs to the HisA/HisF family. In terms of assembly, heterodimer of HisH and HisF.

It is found in the cytoplasm. It catalyses the reaction 5-[(5-phospho-1-deoxy-D-ribulos-1-ylimino)methylamino]-1-(5-phospho-beta-D-ribosyl)imidazole-4-carboxamide + L-glutamine = D-erythro-1-(imidazol-4-yl)glycerol 3-phosphate + 5-amino-1-(5-phospho-beta-D-ribosyl)imidazole-4-carboxamide + L-glutamate + H(+). It functions in the pathway amino-acid biosynthesis; L-histidine biosynthesis; L-histidine from 5-phospho-alpha-D-ribose 1-diphosphate: step 5/9. In terms of biological role, IGPS catalyzes the conversion of PRFAR and glutamine to IGP, AICAR and glutamate. The HisF subunit catalyzes the cyclization activity that produces IGP and AICAR from PRFAR using the ammonia provided by the HisH subunit. This Pseudomonas putida (strain GB-1) protein is Imidazole glycerol phosphate synthase subunit HisF.